The chain runs to 184 residues: MNNLENIVEQLKRNRVVAYPTEAVFGLGCNPNNESAVRALLKLKKRPEEKGLILIAPTKELLLPYIDENKLTAAHWQIFETPSERAITWVMPAKKAVPQYLTGQFDTIAVRLCCIPAVIDLCERTGFALTSTSCNLTGQEPCRTADEVKLQFGADFPVLEAETAGKTNPPEIRDIFTQHIFRQG.

In terms of domain architecture, YrdC-like spans 1-184; the sequence is MNNLENIVEQ…IFTQHIFRQG (184 aa).

This sequence belongs to the SUA5 family. TsaC subfamily.

It is found in the cytoplasm. It carries out the reaction L-threonine + hydrogencarbonate + ATP = L-threonylcarbamoyladenylate + diphosphate + H2O. Its function is as follows. Required for the formation of a threonylcarbamoyl group on adenosine at position 37 (t(6)A37) in tRNAs that read codons beginning with adenine. Catalyzes the conversion of L-threonine, HCO(3)(-)/CO(2) and ATP to give threonylcarbamoyl-AMP (TC-AMP) as the acyladenylate intermediate, with the release of diphosphate. In Actinobacillus pleuropneumoniae serotype 5b (strain L20), this protein is Threonylcarbamoyl-AMP synthase.